The chain runs to 407 residues: Inactive non-canonical poly(A) RNA polymerase protein Trf4-2 (407 aa).

Residues Asp-85 and Asp-87 each contribute to the Mg(2+) site. One can recognise a PAP-associated domain in the interval 221–280 (LALLLIQFLDYYGRKFDFFKYGISVLGQGGCVEKARLRSTLGENNWQSVLCIEDPVTPTN). The interval 354 to 390 (LVQPSPTGSTSPSASASASEDERSGGPATIGFGRCDD) is disordered. Low complexity predominate over residues 357-371 (PSPTGSTSPSASASA).

Belongs to the DNA polymerase type-B-like family.

The sequence is that of Inactive non-canonical poly(A) RNA polymerase protein Trf4-2 from Drosophila melanogaster (Fruit fly).